We begin with the raw amino-acid sequence, 1397 residues long: ABC transporter B family member 2 (1397 aa).

The segment at methionine 1 to glycine 117 is disordered. A compositionally biased stretch (acidic residues) spans isoleucine 24–glutamate 39. The stretch at aspartate 37–asparagine 69 forms a coiled coil. 2 stretches are compositionally biased toward basic and acidic residues: residues asparagine 49–proline 79 and lysine 107–glycine 117. 5 helical membrane passes run isoleucine 137–isoleucine 157, phenylalanine 191–leucine 211, phenylalanine 273–alanine 293, glycine 369–tyrosine 389, and tryptophan 407–glycine 427. The region spanning methionine 140 to asparagine 438 is the ABC transmembrane type-1 1 domain. An ABC transporter 1 domain is found at isoleucine 474–arginine 710. Glycine 509–serine 516 serves as a coordination point for ATP. Disordered regions lie at residues arginine 710–serine 744 and glycine 763–lysine 783. Residues asparagine 735 to serine 744 show a composition bias toward low complexity. Transmembrane regions (helical) follow at residues phenylalanine 801 to isoleucine 821, leucine 846 to phenylalanine 866, leucine 922 to serine 942, leucine 948 to phenylalanine 968, glycine 1028 to tyrosine 1048, and valine 1101 to aspartate 1121. An ABC transmembrane type-1 2 domain is found at phenylalanine 801–lysine 1124. The ABC transporter 2 domain maps to isoleucine 1159–arginine 1395. Position 1194–1201 (glycine 1194–serine 1201) interacts with ATP.

The protein belongs to the ABC transporter superfamily. ABCB family. Multidrug resistance exporter (TC 3.A.1.201) subfamily.

Its subcellular location is the membrane. This chain is ABC transporter B family member 2 (abcB2), found in Dictyostelium discoideum (Social amoeba).